The chain runs to 465 residues: Cysteine--tRNA ligase (465 aa).

Cysteine 30 is a binding site for Zn(2+). A 'HIGH' region motif is present at residues 32–42; sequence PTVYDRAHLGN. Residues cysteine 213, histidine 238, and glutamate 242 each contribute to the Zn(2+) site. Residues 271-275 carry the 'KMSKS' region motif; that stretch reads KMSKS. ATP is bound at residue lysine 274.

This sequence belongs to the class-I aminoacyl-tRNA synthetase family. As to quaternary structure, monomer. Zn(2+) is required as a cofactor.

It is found in the cytoplasm. It carries out the reaction tRNA(Cys) + L-cysteine + ATP = L-cysteinyl-tRNA(Cys) + AMP + diphosphate. This Ruegeria pomeroyi (strain ATCC 700808 / DSM 15171 / DSS-3) (Silicibacter pomeroyi) protein is Cysteine--tRNA ligase.